We begin with the raw amino-acid sequence, 499 residues long: Glycerol kinase (499 aa).

ADP is bound at residue threonine 12. The ATP site is built by threonine 12, threonine 13, and serine 14. Threonine 12 contributes to the sn-glycerol 3-phosphate binding site. Residue arginine 16 participates in ADP binding. Positions 82, 83, 134, and 245 each coordinate sn-glycerol 3-phosphate. Glycerol is bound by residues arginine 82, glutamate 83, tyrosine 134, aspartate 245, and glutamine 246. ADP-binding residues include threonine 267 and glycine 311. Threonine 267, glycine 311, glutamine 315, and glycine 412 together coordinate ATP. ADP contacts are provided by glycine 412 and asparagine 416.

It belongs to the FGGY kinase family.

It catalyses the reaction glycerol + ATP = sn-glycerol 3-phosphate + ADP + H(+). Its pathway is polyol metabolism; glycerol degradation via glycerol kinase pathway; sn-glycerol 3-phosphate from glycerol: step 1/1. Inhibited by fructose 1,6-bisphosphate (FBP). Key enzyme in the regulation of glycerol uptake and metabolism. Catalyzes the phosphorylation of glycerol to yield sn-glycerol 3-phosphate. This Acidiphilium cryptum (strain JF-5) protein is Glycerol kinase.